We begin with the raw amino-acid sequence, 98 residues long: Large ribosomal subunit protein bL25 (98 aa).

The interval 1–23 (MANFVLNAQARAEDKQGKGASRR) is disordered.

Belongs to the bacterial ribosomal protein bL25 family. Part of the 50S ribosomal subunit; part of the 5S rRNA/L5/L18/L25 subcomplex. Contacts the 5S rRNA. Binds to the 5S rRNA independently of L5 and L18.

In terms of biological role, this is one of the proteins that binds to the 5S RNA in the ribosome where it forms part of the central protuberance. This Acinetobacter baumannii (strain AB307-0294) protein is Large ribosomal subunit protein bL25.